A 506-amino-acid chain; its full sequence is MEEFQGYLELDRYQQHDFLYPLIFREYIYALAHDHGLNRSILLDNVGYDNKSSLLIIKRLISRMYKHNHFFISANASNQKKKLGYNKNLYSQKISEGFTVIVEISFSLRLVSSLEATETVKSYNLRSIHSIFPFLEDKFPHLNYVSDVLIPYPIHLEILVQTLRYWVKDASSLHLLRLFLHEYYNWNSLITSNNFFFSKSNPRLFLLLYNSHVCEYEFILLFLRNQSSHLQLTSSGIFFERIHFYEKIKYPVEKVFANDFPASILWFFKDPFMHYVRYQGKSILASKDTPLLMNKWKYYLVNLWQCHSYVWSQPGRIYINKLSKHSLDFLGYFSSIRPNLSVVRSQMLENSFITDNAMKKLDTLVPIIPLIGSLAKVKFCNALGHPISKSTWADSSDFDIIDRFLRICRNLSHYYSGSSRKKSLYRIKYILRLSCLKTLARKHKSTVRTFLKRLGSKLLEEFFTEEEQILSLVFPRASYTFTFKKLYRGRIWYLDIFCINDLINYE.

The protein belongs to the intron maturase 2 family. MatK subfamily.

The protein resides in the plastid. Its subcellular location is the chloroplast. Its function is as follows. Usually encoded in the trnK tRNA gene intron. Probably assists in splicing its own and other chloroplast group II introns. The chain is Maturase K from Prunus persica (Peach).